The following is a 542-amino-acid chain: Putative sodium-dependent excitatory amino acid transporter glt-6 (542 aa).

The Cytoplasmic segment spans residues M1 to E15. 3 helical membrane passes run N16–L36, I55–A75, and L93–I113. Over H114–K191 the chain is Extracellular. Residue N175 is glycosylated (N-linked (GlcNAc...) asparagine). A run of 5 helical transmembrane segments spans residues G192 to L212, V234 to L254, V265 to V285, G303 to M323, and T386 to L406. Residues R505–S517 show a composition bias toward low complexity. The disordered stretch occupies residues R505–V542. Polar residues predominate over residues T518 to I529.

It belongs to the dicarboxylate/amino acid:cation symporter (DAACS) (TC 2.A.23) family.

It localises to the membrane. The polypeptide is Putative sodium-dependent excitatory amino acid transporter glt-6 (glt-6) (Caenorhabditis elegans).